Here is a 514-residue protein sequence, read N- to C-terminus: Peptide chain release factor 3 (514 aa).

Positions 8–268 (KKRRTFAIIS…TFLEFAPEPH (261 aa)) constitute a tr-type G domain. GTP is bound by residues 17-24 (SHPDAGKT), 85-89 (DTPGH), and 139-142 (NKLD).

This sequence belongs to the TRAFAC class translation factor GTPase superfamily. Classic translation factor GTPase family. PrfC subfamily.

Its subcellular location is the cytoplasm. Increases the formation of ribosomal termination complexes and stimulates activities of RF-1 and RF-2. It binds guanine nucleotides and has strong preference for UGA stop codons. It may interact directly with the ribosome. The stimulation of RF-1 and RF-2 is significantly reduced by GTP and GDP, but not by GMP. This is Peptide chain release factor 3 from Streptococcus pyogenes serotype M2 (strain MGAS10270).